Here is a 406-residue protein sequence, read N- to C-terminus: Imidazolonepropionase (406 aa).

2 residues coordinate Fe(3+): His-74 and His-76. 2 residues coordinate Zn(2+): His-74 and His-76. Residues Arg-83, Tyr-146, and His-179 each contribute to the 4-imidazolone-5-propanoate site. Tyr-146 is an N-formimidoyl-L-glutamate binding site. His-240 is a Fe(3+) binding site. His-240 contributes to the Zn(2+) binding site. Glu-243 is a binding site for 4-imidazolone-5-propanoate. Asp-314 contacts Fe(3+). Position 314 (Asp-314) interacts with Zn(2+). Residues Asn-316 and Gly-318 each contribute to the N-formimidoyl-L-glutamate site. Position 319 (Ser-319) interacts with 4-imidazolone-5-propanoate.

The protein belongs to the metallo-dependent hydrolases superfamily. HutI family. Zn(2+) is required as a cofactor. The cofactor is Fe(3+).

The protein localises to the cytoplasm. It catalyses the reaction 4-imidazolone-5-propanoate + H2O = N-formimidoyl-L-glutamate. Its pathway is amino-acid degradation; L-histidine degradation into L-glutamate; N-formimidoyl-L-glutamate from L-histidine: step 3/3. Catalyzes the hydrolytic cleavage of the carbon-nitrogen bond in imidazolone-5-propanoate to yield N-formimidoyl-L-glutamate. It is the third step in the universal histidine degradation pathway. This is Imidazolonepropionase from Kosmotoga olearia (strain ATCC BAA-1733 / DSM 21960 / TBF 19.5.1).